Reading from the N-terminus, the 160-residue chain is Lymphocyte antigen 86 (160 aa).

The first 20 residues, 1 to 20 (MKTLNVLALVLVLLCINAST), serve as a signal peptide directing secretion. Disulfide bonds link C28–C53, C40–C149, and C97–C107.

In terms of assembly, M-shaped tetramer of two CD180-LY86 heterodimers. In terms of tissue distribution, detected in the macrophage-like 10.4 cells.

The protein resides in the secreted. Its subcellular location is the extracellular space. May cooperate with CD180 and TLR4 to mediate the innate immune response to bacterial lipopolysaccharide (LPS) and cytokine production. Important for efficient CD180 cell surface expression. In Gallus gallus (Chicken), this protein is Lymphocyte antigen 86 (LY86).